Consider the following 149-residue polypeptide: Transcriptional repressor NrdR (149 aa).

A zinc finger spans residues 3–34 (CPFCFAVDTKVIDSRLVGEGSSVRRRRQCLVC). Residues 49-139 (PRVVKSNDVR…VYRSFEDIKE (91 aa)) enclose the ATP-cone domain.

Belongs to the NrdR family. Requires Zn(2+) as cofactor.

Negatively regulates transcription of bacterial ribonucleotide reductase nrd genes and operons by binding to NrdR-boxes. The sequence is that of Transcriptional repressor NrdR from Klebsiella pneumoniae (strain 342).